A 757-amino-acid polypeptide reads, in one-letter code: Protein hunchback (757 aa).

Disordered stretches follow at residues 30 to 51 and 171 to 213; these read EPGH…PIPS and EKLQ…EDMK. Polar residues predominate over residues 39-51; the sequence is SVASSPRQSPIPS. Residues 197–213 are compositionally biased toward basic and acidic residues; that stretch reads EPEKEHDQMSNSSEDMK. 4 consecutive C2H2-type zinc fingers follow at residues 239 to 261, 268 to 290, 296 to 318, and 324 to 348; these read YKCK…TRTH, LQCP…IRKH, FQCD…RKSH, and YRCA…KYGH. Disordered regions lie at residues 367–416, 511–535, and 602–694; these read DVYG…VATS, EQLQ…YERK, and MTSP…APPS. Low complexity-rich tracts occupy residues 397–414 and 512–521; these read VAAV…QPVA and QLQQQNQQQS. The span at 522–531 shows a compositional bias: acidic residues; that stretch reads DNEEEDQDDE. Low complexity predominate over residues 651–694; that stretch reads ANTSASSTASSSGNSSNASSNSNGNSSSNSSSNGTTSAVAAPPS. C2H2-type zinc fingers lie at residues 704-726 and 732-756; these read YECK…MGYH and FKCN…RNAH.

It belongs to the hunchback C2H2-type zinc-finger protein family.

It localises to the nucleus. In terms of biological role, gap class segmentation protein that controls development of head structures. The protein is Protein hunchback (hb) of Drosophila sechellia (Fruit fly).